Reading from the N-terminus, the 315-residue chain is Putative heme-binding peroxidase (315 aa).

His-40 (proton acceptor) is an active-site residue. Residue His-169 participates in heme b binding. The active-site Tryptophan radical intermediate is the Trp-185. Residues 267 to 286 (EEGKPLDKTAPPAGDETCPV) are disordered.

It belongs to the peroxidase family. Cytochrome c peroxidase subfamily. It depends on heme b as a cofactor.

Functionally, destroys radicals which are normally produced within the cells and which are toxic to biological systems. The chain is Putative heme-binding peroxidase from Cryptococcus neoformans var. neoformans serotype D (strain B-3501A) (Filobasidiella neoformans).